We begin with the raw amino-acid sequence, 273 residues long: Large ribosomal subunit protein uL2cz/uL2cy (273 aa).

Disordered stretches follow at residues 1–22 (MAIHLYKTSTPSTRNGAVDSQV) and 223–254 (MNPVDHPHGGGEGRAPIGRKKPTTPWGYPALG).

This sequence belongs to the universal ribosomal protein uL2 family. In terms of assembly, part of the 50S ribosomal subunit.

The protein resides in the plastid. It localises to the chloroplast. The sequence is that of Large ribosomal subunit protein uL2cz/uL2cy (rpl2-A) from Drimys granadensis.